The chain runs to 664 residues: Cyclic nucleotide-gated channel alpha-2 (664 aa).

Residues 1–10 (MMTEKSNGVK) are compositionally biased toward polar residues. The interval 1–51 (MMTEKSNGVKSSPANNHNHHPPPSIKANGKDDHRAGSRPQSVAADDDTSPE) is disordered. The Cytoplasmic segment spans residues 1-146 (MMTEKSNGVK…PAGDWYYRWL (146 aa)). Residues 147–168 (FVIAMPVLYNWCLLVARACFSD) form a helical membrane-spanning segment. Over 169–178 (LQRNYFVVWL) the chain is Extracellular. The chain crosses the membrane as a helical span at residues 179 to 199 (VLDYFSDTVYIADLIIRLRTG). At 200-224 (FLEQGLLVKDPKKLRDNYIHTLQFK) the chain is on the cytoplasmic side. Residues 225–243 (LDVASIIPTDLIYFAVGIH) traverse the membrane as a helical segment. The Extracellular portion of the chain corresponds to 244-248 (SPEVR). Residues 249-267 (FNRLLHFARMFEFFDRTET) traverse the membrane as a helical segment. The Cytoplasmic segment spans residues 268 to 274 (RTSYPNI). Residues 272–380 (PNIFRISNLV…GNVGSMISNM (109 aa)) are ion conduction pathway. Residues 275–298 (FRISNLVLYILVIIHWNACIYYVI) traverse the membrane as a helical segment. Residues 299-321 (SKSIGFGVDTWVYPNITDPEYGY) are Extracellular-facing. Transmembrane regions (helical) follow at residues 322-356 (LARE…LFVI) and 357-381 (FDFL…SNMN). A selectivity filter region spans residues 339–342 (TIGE). The tract at residues 382–458 (ATRAEFQAKI…STLKKVRIFQ (77 aa)) is C-linker. The Cytoplasmic portion of the chain corresponds to 382-664 (ATRAEFQAKI…INTPEPTAAE (283 aa)). Residues 462–582 (AGLLVELVLK…EERGREILMK (121 aa)) are cyclic nucleotide-binding domain. Positions 522, 525, 538, and 539 each coordinate 3',5'-cyclic GMP. Residues arginine 538 and threonine 539 each contribute to the 3',5'-cyclic AMP site. Residues 599-653 (VQEKLEQLETNMDTLYTRFARLLAEYTGAQQKLKQRITVLETKMKQNHEDDYLSD) are a coiled coil.

This sequence belongs to the cyclic nucleotide-gated cation channel (TC 1.A.1.5) family. CNGA2 subfamily. In terms of assembly, the olfactory cyclic nucleotide-gated channel is an heterotetramer composed of CNGA2, CNGA4 and CNGB1b subunits with 2:1:1 stoichiometry. Olfactory neurons. Widely expressed in brain, enriched in deep cerebellar nuclei, olfactory bulb mitral cells and cerebellar Purkinje neurons. Expressed in olfactory sensory cilia (at protein level).

It is found in the cell projection. Its subcellular location is the cilium membrane. The catalysed reaction is Ca(2+)(in) = Ca(2+)(out). It carries out the reaction Na(+)(in) = Na(+)(out). It catalyses the reaction K(+)(in) = K(+)(out). The enzyme catalyses NH4(+)(in) = NH4(+)(out). The catalysed reaction is Rb(+)(in) = Rb(+)(out). It carries out the reaction Li(+)(in) = Li(+)(out). It catalyses the reaction Cs(+)(in) = Cs(+)(out). With respect to regulation, the channel activity is inhibited by L-cis diltiazem. Pore-forming subunit of the olfactory cyclic nucleotide-gated channel. Operates in the cilia of olfactory sensory neurons where chemical stimulation of the odorant is converted to an electrical signal. Mediates odorant-induced cAMP-dependent Ca(2+) influx triggering neuron depolarization. The rise of intracellular Ca(2+) levels potentiates the olfactory response by activating Ca(2+)-dependent Cl(-) channels, but it also serves as a negative feedback signal to desensitize the channel for rapid adaptation to odorants. Conducts cAMP- and cGMP-gated ion currents, with permeability for monovalent and divalent cations. The sequence is that of Cyclic nucleotide-gated channel alpha-2 from Rattus norvegicus (Rat).